Here is a 190-residue protein sequence, read N- to C-terminus: Potassium-transporting ATPase KdpC subunit (190 aa).

Residues 10 to 30 (TFIFLLLITGGVYPLLTTALG) traverse the membrane as a helical segment.

It belongs to the KdpC family. As to quaternary structure, the system is composed of three essential subunits: KdpA, KdpB and KdpC.

The protein resides in the cell inner membrane. Functionally, part of the high-affinity ATP-driven potassium transport (or Kdp) system, which catalyzes the hydrolysis of ATP coupled with the electrogenic transport of potassium into the cytoplasm. This subunit acts as a catalytic chaperone that increases the ATP-binding affinity of the ATP-hydrolyzing subunit KdpB by the formation of a transient KdpB/KdpC/ATP ternary complex. The protein is Potassium-transporting ATPase KdpC subunit of Escherichia coli O9:H4 (strain HS).